We begin with the raw amino-acid sequence, 1537 residues long: DNA-directed RNA polymerase subunit beta' (1537 aa).

Residues C57, C59, C72, and C75 each contribute to the Zn(2+) site. Residues D746, D748, and D750 each contribute to the Mg(2+) site. Zn(2+)-binding residues include C1120, C1201, C1208, and C1211. The interval 1502-1537 (LEKYGQTSVSTDAVTGSQRYDDTRPSSTSINPSYGD) is disordered. Polar residues-rich tracts occupy residues 1506 to 1519 (GQTS…TGSQ) and 1526 to 1537 (PSSTSINPSYGD).

It belongs to the RNA polymerase beta' chain family. As to quaternary structure, the RNAP catalytic core consists of 2 alpha, 1 beta, 1 beta' and 1 omega subunit. When a sigma factor is associated with the core the holoenzyme is formed, which can initiate transcription. Mg(2+) is required as a cofactor. It depends on Zn(2+) as a cofactor.

The enzyme catalyses RNA(n) + a ribonucleoside 5'-triphosphate = RNA(n+1) + diphosphate. In terms of biological role, DNA-dependent RNA polymerase catalyzes the transcription of DNA into RNA using the four ribonucleoside triphosphates as substrates. This Deinococcus geothermalis (strain DSM 11300 / CIP 105573 / AG-3a) protein is DNA-directed RNA polymerase subunit beta'.